The primary structure comprises 503 residues: Probable cytosol aminopeptidase (503 aa).

2 residues coordinate Mn(2+): Lys-270 and Asp-275. Lys-282 is an active-site residue. Residues Asp-293, Asp-352, and Glu-354 each contribute to the Mn(2+) site. Arg-356 is a catalytic residue.

This sequence belongs to the peptidase M17 family. The cofactor is Mn(2+).

Its subcellular location is the cytoplasm. It carries out the reaction Release of an N-terminal amino acid, Xaa-|-Yaa-, in which Xaa is preferably Leu, but may be other amino acids including Pro although not Arg or Lys, and Yaa may be Pro. Amino acid amides and methyl esters are also readily hydrolyzed, but rates on arylamides are exceedingly low.. It catalyses the reaction Release of an N-terminal amino acid, preferentially leucine, but not glutamic or aspartic acids.. In terms of biological role, presumably involved in the processing and regular turnover of intracellular proteins. Catalyzes the removal of unsubstituted N-terminal amino acids from various peptides. This is Probable cytosol aminopeptidase from Yersinia pseudotuberculosis serotype O:1b (strain IP 31758).